A 293-amino-acid chain; its full sequence is Bifunctional protein FolD (293 aa).

NADP(+) contacts are provided by residues 165 to 167, serine 190, and isoleucine 231; that span reads GRS.

The protein belongs to the tetrahydrofolate dehydrogenase/cyclohydrolase family. As to quaternary structure, homodimer.

It catalyses the reaction (6R)-5,10-methylene-5,6,7,8-tetrahydrofolate + NADP(+) = (6R)-5,10-methenyltetrahydrofolate + NADPH. It carries out the reaction (6R)-5,10-methenyltetrahydrofolate + H2O = (6R)-10-formyltetrahydrofolate + H(+). Its pathway is one-carbon metabolism; tetrahydrofolate interconversion. Catalyzes the oxidation of 5,10-methylenetetrahydrofolate to 5,10-methenyltetrahydrofolate and then the hydrolysis of 5,10-methenyltetrahydrofolate to 10-formyltetrahydrofolate. In Synechococcus sp. (strain CC9311), this protein is Bifunctional protein FolD.